Here is a 256-residue protein sequence, read N- to C-terminus: Probable elongation factor 1-delta (256 aa).

Phosphoserine is present on residues Ser-37, Ser-53, and Ser-89. The tract at residues 110-146 (NGVSKEPEVEAKKPEANDDDDDVDLFGSDSEEEDGEA) is disordered. Residues 114 to 125 (KEPEVEAKKPEA) are compositionally biased toward basic and acidic residues. Residues 126–144 (NDDDDDVDLFGSDSEEEDG) show a composition bias toward acidic residues. 2 positions are modified to phosphoserine: Ser-137 and Ser-139.

The protein belongs to the EF-1-beta/EF-1-delta family. As to quaternary structure, EF-1 is composed of 4 subunits: alpha, beta, delta, and gamma.

Its function is as follows. EF-1-beta and EF-1-delta stimulate the exchange of GDP bound to EF-1-alpha to GTP. The polypeptide is Probable elongation factor 1-delta (eEF1delta) (Drosophila melanogaster (Fruit fly)).